The following is a 341-amino-acid chain: Two-component response regulator EHD1 (341 aa).

Residues 12–127 (RVLVIDDDCS…ELSNIWQHIF (116 aa)) form the Response regulatory domain. Position 63 is a 4-aspartylphosphate (aspartate 63). One can recognise an HTH myb-type domain in the interval 195–254 (DLGKSRLTWTTQLHRQFIAAVNHLGEDKAVPKKILGIMKVKHLTREQVASHLQKYRMQLK). The segment at residues 225–250 (PKKILGIMKVKHLTREQVASHLQKYR) is a DNA-binding region (H-T-H motif).

Post-translationally, two-component system major event consists of a His-to-Asp phosphorelay between a sensor histidine kinase (HK) and a response regulator (RR). In plants, the His-to-Asp phosphorelay involves an additional intermediate named Histidine-containing phosphotransfer protein (HPt). This multistep phosphorelay consists of a His-Asp-His-Asp sequential transfer of a phosphate group between first a His and an Asp of the HK protein, followed by the transfer to a conserved His of the HPt protein and finally the transfer to an Asp in the receiver domain of the RR protein.

It localises to the nucleus. Its function is as follows. Transcriptional activator that acts as a floral inducer to promote short-day (SD) flowering pathway. Activates Hd3a and other FT-like genes independently from Hd1. May also activate MADS-box transcription factors involved in flowering regulation. In Oryza sativa subsp. indica (Rice), this protein is Two-component response regulator EHD1 (EHD1).